We begin with the raw amino-acid sequence, 428 residues long: Putative zinc metalloprotease LL2128 (428 aa).

Residue H19 participates in Zn(2+) binding. The active site involves E20. Position 23 (H23) interacts with Zn(2+). 3 consecutive transmembrane segments (helical) span residues 188–210, 354–376, and 401–423; these read GPLN…QGGV, IVYL…IPVL, and IITM…NDIL. The 95-residue stretch at 188 to 282 folds into the PDZ domain; sequence GPLNNFILGI…SETLSVTPKK (95 aa).

The protein belongs to the peptidase M50B family. Zn(2+) serves as cofactor.

Its subcellular location is the cell membrane. This chain is Putative zinc metalloprotease LL2128, found in Lactococcus lactis subsp. lactis (strain IL1403) (Streptococcus lactis).